The sequence spans 327 residues: ATP-dependent 6-phosphofructokinase (327 aa).

Gly12 serves as a coordination point for ATP. Residues 22–26 and 55–60 contribute to the ADP site; these read RGVVR and RYSVSD. ATP contacts are provided by residues 73–74 and 103–106; these read RF and GDGS. Asp104 lines the Mg(2+) pocket. 127–129 serves as a coordination point for substrate; the sequence is TID. Asp129 functions as the Proton acceptor in the catalytic mechanism. Arg156 is a binding site for ADP. Substrate-binding positions include Arg164 and 171–173; that span reads MGR. Residues 187 to 189, Lys213, and 215 to 217 contribute to the ADP site; these read GCE and KKH. Substrate-binding positions include Glu224, Arg245, and 251-254; that span reads HIQR.

The protein belongs to the phosphofructokinase type A (PFKA) family. ATP-dependent PFK group I subfamily. Prokaryotic clade 'B1' sub-subfamily. Homotetramer. Mg(2+) serves as cofactor.

The protein resides in the cytoplasm. The enzyme catalyses beta-D-fructose 6-phosphate + ATP = beta-D-fructose 1,6-bisphosphate + ADP + H(+). Its pathway is carbohydrate degradation; glycolysis; D-glyceraldehyde 3-phosphate and glycerone phosphate from D-glucose: step 3/4. Its activity is regulated as follows. Allosterically activated by ADP and other diphosphonucleosides, and allosterically inhibited by phosphoenolpyruvate. Its function is as follows. Catalyzes the phosphorylation of D-fructose 6-phosphate to fructose 1,6-bisphosphate by ATP, the first committing step of glycolysis. In Yersinia pseudotuberculosis serotype IB (strain PB1/+), this protein is ATP-dependent 6-phosphofructokinase.